The chain runs to 728 residues: Catalase-peroxidase 1 (728 aa).

A cross-link (tryptophyl-tyrosyl-methioninium (Trp-Tyr) (with M-244)) is located at residues 91–218 (WHSAGTYRIA…LAAVQMGLIY (128 aa)). Catalysis depends on histidine 92, which acts as the Proton acceptor. Residues 218–244 (YVNPEGPDGNPDPVAAARDIRDTFARM) constitute a cross-link (tryptophyl-tyrosyl-methioninium (Tyr-Met) (with W-91)). Histidine 259 contributes to the heme b binding site.

This sequence belongs to the peroxidase family. Peroxidase/catalase subfamily. As to quaternary structure, homodimer or homotetramer. Heme b is required as a cofactor. Formation of the three residue Trp-Tyr-Met cross-link is important for the catalase, but not the peroxidase activity of the enzyme.

It carries out the reaction H2O2 + AH2 = A + 2 H2O. The catalysed reaction is 2 H2O2 = O2 + 2 H2O. Bifunctional enzyme with both catalase and broad-spectrum peroxidase activity. This chain is Catalase-peroxidase 1, found in Burkholderia ambifaria (strain ATCC BAA-244 / DSM 16087 / CCUG 44356 / LMG 19182 / AMMD) (Burkholderia cepacia (strain AMMD)).